The following is a 72-amino-acid chain: Exodeoxyribonuclease 7 small subunit (72 aa).

This sequence belongs to the XseB family. As to quaternary structure, heterooligomer composed of large and small subunits.

Its subcellular location is the cytoplasm. The catalysed reaction is Exonucleolytic cleavage in either 5'- to 3'- or 3'- to 5'-direction to yield nucleoside 5'-phosphates.. Bidirectionally degrades single-stranded DNA into large acid-insoluble oligonucleotides, which are then degraded further into small acid-soluble oligonucleotides. This Chlamydia trachomatis serovar L2 (strain ATCC VR-902B / DSM 19102 / 434/Bu) protein is Exodeoxyribonuclease 7 small subunit.